A 329-amino-acid polypeptide reads, in one-letter code: Catabolite control protein A (329 aa).

In terms of domain architecture, HTH lacI-type spans 1–57; the sequence is MTVTIYDVAREARVSMATVSRVVNGNQNVKAETKNKVNEVIKRLNYRPNAVARGLAS. A DNA-binding region (H-T-H motif) is located at residues 5 to 24; the sequence is IYDVAREARVSMATVSRVVN.

Its function is as follows. Global transcriptional regulator of carbon catabolite repression (CCR) and carbon catabolite activation (CCA), which ensures optimal energy usage under diverse conditions. The chain is Catabolite control protein A (ccpA) from Staphylococcus aureus (strain COL).